The sequence spans 115 residues: SOSS complex subunit C homolog (115 aa).

It belongs to the SOSS-C family.

In Drosophila grimshawi (Hawaiian fruit fly), this protein is SOSS complex subunit C homolog.